A 196-amino-acid polypeptide reads, in one-letter code: Interleukin-23 subunit alpha (196 aa).

An N-terminal signal peptide occupies residues 1–21; that stretch reads MLDCRAVIMLWLLPWVTQGLA.

It belongs to the IL-6 superfamily. As to quaternary structure, heterodimer with IL12B; disulfide-linked. The heterodimer is known as interleukin IL-23. Interacts with IL23R; this interaction enables recruitment of IL12RB1. Secreted by activated dendritic cells (at protein level). Detected in various tissues with higher expression in polarized Th1 cells and activated macrophages.

Its subcellular location is the secreted. Associates with IL12B to form the IL-23 interleukin, a heterodimeric cytokine which functions in innate and adaptive immunity. IL-23 may constitute with IL-17 an acute response to infection in peripheral tissues. IL-23 binds to a heterodimeric receptor complex composed of IL12RB1 and IL23R, activates the Jak-Stat signaling cascade, stimulates memory rather than naive T-cells and promotes production of pro-inflammatory cytokines. IL-23 induces autoimmune inflammation and thus may be responsible for autoimmune inflammatory diseases and may be important for tumorigenesis. Functionally, associates with IL12B to form the pro-inflammatory cytokine IL-23 that plays different roles in innate and adaptive immunity. Released by antigen-presenting cells such as dendritic cells or macrophages, binds to a heterodimeric receptor complex composed of IL12RB1 and IL23R to activate JAK2 and TYK2 which then phosphorylate the receptor to form a docking site leading to the phosphorylation of STAT3 and STAT4. This process leads to activation of several pathways including p38 MAPK or NF-kappa-B and promotes the production of pro-inflammatory cytokines such as interleukin-17A/IL17A. In turn, participates in the early and effective intracellular bacterial clearance. Promotes the expansion and survival of T-helper 17 cells, a CD4-positive helper T-cell subset that produces IL-17, as well as other IL-17-producing cells. This is Interleukin-23 subunit alpha (Il23a) from Mus musculus (Mouse).